A 1955-amino-acid chain; its full sequence is Rootletin (1955 aa).

Coiled-coil stretches lie at residues 29-58 (EENR…ESIE), 162-223 (EENL…QQHT), 284-1303 (LMRK…AVES), 1368-1579 (VGVT…EELR), and 1607-1863 (RRWE…RTKG). 5 disordered regions span residues 321 to 341 (VTEN…DLKR), 391 to 451 (LTTK…KKLD), 504 to 551 (LKER…RSLK), 907 to 935 (EKLN…NEAV), and 961 to 998 (RDLE…QKTL). Composition is skewed to basic and acidic residues over residues 326-341 (MKSE…DLKR) and 396-451 (GEID…KKLD). Composition is skewed to basic and acidic residues over residues 907 to 931 (EKLN…ESSK), 961 to 982 (RDLE…KMEL), and 989 to 998 (EDRKKEQKTL).

The protein belongs to the rootletin family. Expressed in head ciliated neurons.

Its subcellular location is the cytoplasm. The protein localises to the cytoskeleton. The protein resides in the cilium basal body. It is found in the cilium axoneme. Major structural component of the ciliary rootlet, a cytoskeletal-like structure in ciliated cells which originates from the basal body at the proximal end of a cilium and extends proximally toward the cell nucleus. Required for cilia integrity and function in sensory neurons. Maintains cilia integrity, partly by modulating the assembly and transport of intraflagellar proteins along the ciliary axoneme. Required for normal mating behavior and normal responses to environmental and chemical stimuli. The chain is Rootletin from Caenorhabditis elegans.